Reading from the N-terminus, the 146-residue chain is Protein beta (146 aa).

This is Protein beta from Adelaide River virus (ARV).